The chain runs to 560 residues: Membrane protein insertase YidC (560 aa).

6 consecutive transmembrane segments (helical) span residues 5 to 25 (IINL…WQYF), 334 to 354 (AIDF…MNFF), 357 to 377 (YVGN…LLMF), 431 to 451 (LPIL…YVTI), 476 to 496 (LFGL…WPIL), and 522 to 542 (FMPL…LIYW).

This sequence belongs to the OXA1/ALB3/YidC family. Type 1 subfamily. In terms of assembly, interacts with the Sec translocase complex via SecD. Specifically interacts with transmembrane segments of nascent integral membrane proteins during membrane integration.

It is found in the cell inner membrane. Functionally, required for the insertion and/or proper folding and/or complex formation of integral membrane proteins into the membrane. Involved in integration of membrane proteins that insert both dependently and independently of the Sec translocase complex, as well as at least some lipoproteins. Aids folding of multispanning membrane proteins. The polypeptide is Membrane protein insertase YidC (Rickettsia africae (strain ESF-5)).